A 467-amino-acid polypeptide reads, in one-letter code: Tubulointerstitial nephritis antigen-like (467 aa).

The first 21 residues, Met1–Gly21, serve as a signal peptide directing secretion. The 49-residue stretch at Glu50 to Pro98 folds into the SMB domain. 5 cysteine pairs are disulfide-bonded: Cys54/Cys73, Cys71/Cys73, Cys71/Cys85, Cys77/Cys84, and Cys85/Cys92. An N-linked (GlcNAc...) asparagine glycan is attached at Asn78. N-linked (GlcNAc...) asparagine glycosylation occurs at Asn161.

Belongs to the peptidase C1 family. Glycosylated. As to expression, highly expressed in aorta, heart, placenta, kidney and a colorectal adenocarcinoma cell line. Moderately expressed in skeletal muscle, pancreas, lung, lymph nodes, adrenal gland, bone marrow and thyroid. Weakly expressed in colon, small intestine, ovary, spleen, testis and prostate. Predominantly found in vascular smooth muscle cells, but also in cardiac and skeletal muscle cells as well as kidney.

The protein resides in the secreted. May be implicated in the adrenocortical zonation and in mechanisms for repressing the CYP11B1 gene expression in adrenocortical cells. This is a non catalytic peptidase C1 family protein. The polypeptide is Tubulointerstitial nephritis antigen-like (TINAGL1) (Homo sapiens (Human)).